The following is a 487-amino-acid chain: Glutamyl-tRNA(Gln) amidotransferase subunit A (487 aa).

Residues lysine 77 and serine 152 each act as charge relay system in the active site. Residue serine 176 is the Acyl-ester intermediate of the active site.

This sequence belongs to the amidase family. GatA subfamily. In terms of assembly, heterotrimer of A, B and C subunits.

It carries out the reaction L-glutamyl-tRNA(Gln) + L-glutamine + ATP + H2O = L-glutaminyl-tRNA(Gln) + L-glutamate + ADP + phosphate + H(+). Allows the formation of correctly charged Gln-tRNA(Gln) through the transamidation of misacylated Glu-tRNA(Gln) in organisms which lack glutaminyl-tRNA synthetase. The reaction takes place in the presence of glutamine and ATP through an activated gamma-phospho-Glu-tRNA(Gln). The protein is Glutamyl-tRNA(Gln) amidotransferase subunit A of Lysinibacillus sphaericus (strain C3-41).